Reading from the N-terminus, the 824-residue chain is Kinesin-like protein KIFC3 (824 aa).

The segment at 27 to 79 (EPKPGMARPAPASPAARPFPHTGQGRLRTGRGKDILPSGEEDSTSRTAARPSL) is disordered. Residues 33-46 (ARPAPASPAARPFP) are compositionally biased toward low complexity. 2 coiled-coil regions span residues 100–360 (LTVQ…ENLA) and 393–430 (LLQE…LQLR). The Kinesin motor domain maps to 443–766 (NIRVIARVRP…LRFAERVRSV (324 aa)). 526–533 (GQTGAGKT) provides a ligand contact to ATP. Positions 771–824 (GSRRTELGSWSSQEHLEWEPACQTPQPTARAHSAPGSGTSSRPGSIRRKLQPSA) are disordered. 2 positions are modified to phosphoserine: serine 811 and serine 815. The segment covering 815–824 (SIRRKLQPSA) has biased composition (basic residues).

It belongs to the TRAFAC class myosin-kinesin ATPase superfamily. Kinesin family. As to quaternary structure, interacts with annexin XIIIB. As to expression, predominant expression in the kidney, testis and ovary. Also expressed in brain, heart, liver, lung and uterus.

It is found in the cytoplasm. Its subcellular location is the cytoskeleton. It localises to the cytoplasmic vesicle membrane. The protein resides in the cell junction. The protein localises to the adherens junction. It is found in the microtubule organizing center. Its subcellular location is the centrosome. Minus-end microtubule-dependent motor protein. Involved in apically targeted transport. Required for zonula adherens maintenance. The sequence is that of Kinesin-like protein KIFC3 (Kifc3) from Mus musculus (Mouse).